A 483-amino-acid polypeptide reads, in one-letter code: NADH-quinone oxidoreductase subunit N (483 aa).

A run of 13 helical transmembrane segments spans residues 7 to 27, 33 to 53, 76 to 96, 108 to 128, 161 to 181, 196 to 216, 235 to 255, 272 to 292, 297 to 317, 323 to 343, 369 to 389, 402 to 422, and 442 to 462; these read AILT…LGAV, ALAS…AFYI, FAKI…QDYM, VLII…DLIA, FVLG…AYGF, GGDM…GLAF, PTPI…ALFA, IVAF…IGQT, LMAY…SAGT, AMLI…AFIL, ALAI…LGFF, GLVW…FYYI, and MGLV…LGWV.

The protein belongs to the complex I subunit 2 family. In terms of assembly, NDH-1 is composed of 14 different subunits. Subunits NuoA, H, J, K, L, M, N constitute the membrane sector of the complex.

The protein localises to the cell inner membrane. The enzyme catalyses a quinone + NADH + 5 H(+)(in) = a quinol + NAD(+) + 4 H(+)(out). In terms of biological role, NDH-1 shuttles electrons from NADH, via FMN and iron-sulfur (Fe-S) centers, to quinones in the respiratory chain. The immediate electron acceptor for the enzyme in this species is believed to be ubiquinone. Couples the redox reaction to proton translocation (for every two electrons transferred, four hydrogen ions are translocated across the cytoplasmic membrane), and thus conserves the redox energy in a proton gradient. This is NADH-quinone oxidoreductase subunit N from Jannaschia sp. (strain CCS1).